Consider the following 519-residue polypeptide: B3 domain-containing protein Os03g0620400 (519 aa).

The segment at residues 26 to 119 (MKCFHLQMSA…RFEVLILDSD (94 aa)) is a DNA-binding region (TF-B3 1). A disordered region spans residues 138 to 218 (ERNAAPVDIS…DPQMPPGRNY (81 aa)). The span at 189 to 209 (SGEEGTDSSTSEDESSYELDD) shows a compositional bias: acidic residues. DNA-binding regions (TF-B3) lie at residues 249–349 (VAIM…LRET) and 416–516 (YVSI…IRRN).

It localises to the nucleus. The polypeptide is B3 domain-containing protein Os03g0620400 (Oryza sativa subsp. japonica (Rice)).